We begin with the raw amino-acid sequence, 456 residues long: Putative F-box/LRR-repeat protein At5g02700 (456 aa).

Residues 26–72 form the F-box domain; it reads ADFINYMPDDILHHILSFIPTDLAMRTSVLSRRWRHVWCETPCLDIT. LRR repeat units follow at residues 126–154, 177–202, 206–224, 271–300, and 330–355; these read VRDF…DVTL, FCQI…TLDT, LERL…DINQ, LSPL…TVGE, and FVRS…RPST.

This is Putative F-box/LRR-repeat protein At5g02700 from Arabidopsis thaliana (Mouse-ear cress).